The following is a 149-amino-acid chain: Large ribosomal subunit protein uL11 (149 aa).

Belongs to the universal ribosomal protein uL11 family. As to quaternary structure, part of the ribosomal stalk of the 50S ribosomal subunit. Interacts with L10 and the large rRNA to form the base of the stalk. L10 forms an elongated spine to which L12 dimers bind in a sequential fashion forming a multimeric L10(L12)X complex. One or more lysine residues are methylated.

In terms of biological role, forms part of the ribosomal stalk which helps the ribosome interact with GTP-bound translation factors. This Methylorubrum extorquens (strain CM4 / NCIMB 13688) (Methylobacterium extorquens) protein is Large ribosomal subunit protein uL11.